Here is a 271-residue protein sequence, read N- to C-terminus: 3-methyl-2-oxobutanoate hydroxymethyltransferase (271 aa).

2 residues coordinate Mg(2+): D51 and D90. 3-methyl-2-oxobutanoate is bound by residues 51–52 (DS), D90, and K118. E120 lines the Mg(2+) pocket. E186 (proton acceptor) is an active-site residue.

This sequence belongs to the PanB family. In terms of assembly, homodecamer; pentamer of dimers. Mg(2+) is required as a cofactor.

Its subcellular location is the cytoplasm. It catalyses the reaction 3-methyl-2-oxobutanoate + (6R)-5,10-methylene-5,6,7,8-tetrahydrofolate + H2O = 2-dehydropantoate + (6S)-5,6,7,8-tetrahydrofolate. Its pathway is cofactor biosynthesis; (R)-pantothenate biosynthesis; (R)-pantoate from 3-methyl-2-oxobutanoate: step 1/2. Functionally, catalyzes the reversible reaction in which hydroxymethyl group from 5,10-methylenetetrahydrofolate is transferred onto alpha-ketoisovalerate to form ketopantoate. This is 3-methyl-2-oxobutanoate hydroxymethyltransferase from Xanthomonas campestris pv. campestris (strain B100).